Reading from the N-terminus, the 804-residue chain is DNA mismatch repair protein MutS (804 aa).

Residue 614–621 coordinates ATP; sequence GPNMAGKS.

It belongs to the DNA mismatch repair MutS family.

In terms of biological role, this protein is involved in the repair of mismatches in DNA. It is possible that it carries out the mismatch recognition step. This protein has a weak ATPase activity. This Ehrlichia chaffeensis (strain ATCC CRL-10679 / Arkansas) protein is DNA mismatch repair protein MutS.